Consider the following 124-residue polypeptide: MADSSPEVKAVARYIRMSPFKVRRVLDQIRGRTYADALILLEFMPYAACEPVRKVLRSAVANAEHNNGLDPRDLVISQAYADQGPVLKRFRPRAQGRAYPIRKRTCHITIAVRPIEEAEAATAS.

It belongs to the universal ribosomal protein uL22 family. Part of the 50S ribosomal subunit.

Its function is as follows. This protein binds specifically to 23S rRNA; its binding is stimulated by other ribosomal proteins, e.g. L4, L17, and L20. It is important during the early stages of 50S assembly. It makes multiple contacts with different domains of the 23S rRNA in the assembled 50S subunit and ribosome. In terms of biological role, the globular domain of the protein is located near the polypeptide exit tunnel on the outside of the subunit, while an extended beta-hairpin is found that lines the wall of the exit tunnel in the center of the 70S ribosome. The chain is Large ribosomal subunit protein uL22 from Synechococcus sp. (strain JA-2-3B'a(2-13)) (Cyanobacteria bacterium Yellowstone B-Prime).